The following is a 548-amino-acid chain: Chaperonin GroEL (548 aa).

Residues 30 to 33 (TLGP), K51, 87 to 91 (DGTTT), G415, 479 to 481 (NAA), and D495 each bind ATP. The interval 525–548 (PKEDKTSDASSSPAGGMGGMGGMM) is disordered. Residues 539–548 (GGMGGMGGMM) show a composition bias toward gly residues.

It belongs to the chaperonin (HSP60) family. Forms a cylinder of 14 subunits composed of two heptameric rings stacked back-to-back. Interacts with the co-chaperonin GroES.

It localises to the cytoplasm. It catalyses the reaction ATP + H2O + a folded polypeptide = ADP + phosphate + an unfolded polypeptide.. Together with its co-chaperonin GroES, plays an essential role in assisting protein folding. The GroEL-GroES system forms a nano-cage that allows encapsulation of the non-native substrate proteins and provides a physical environment optimized to promote and accelerate protein folding. The polypeptide is Chaperonin GroEL (Buchnera aphidicola subsp. Rhopalosiphum padi).